The following is a 502-amino-acid chain: 4,4'-diapophytoene desaturase (4,4'-diaponeurosporene-forming) (502 aa).

5-17 (VIGAGVTGLAAAA) serves as a coordination point for FAD.

It belongs to the carotenoid/retinoid oxidoreductase family. CrtN subfamily.

The catalysed reaction is 15-cis-4,4'-diapophytoene + 3 FAD + 3 H(+) = all-trans-4,4'-diaponeurosporene + 3 FADH2. It functions in the pathway carotenoid biosynthesis; staphyloxanthin biosynthesis; staphyloxanthin from farnesyl diphosphate: step 2/5. In terms of biological role, involved in the biosynthesis of the yellow-orange carotenoid staphyloxanthin, which plays a role in the virulence via its protective function against oxidative stress. Catalyzes three successive dehydrogenation reactions that lead to the introduction of three double bonds into 4,4'-diapophytoene (dehydrosqualene), with 4,4'-diapophytofluene and 4,4'-diapo-zeta-carotene as intermediates, and 4,4'-diaponeurosporene (the major deep-yellow pigment in staphylococci strains) as the end product. This chain is 4,4'-diapophytoene desaturase (4,4'-diaponeurosporene-forming), found in Staphylococcus aureus (strain MRSA252).